The primary structure comprises 424 residues: Carbohydrate sulfotransferase 8 (424 aa).

Residues 1–10 (MTLRPGTMRL) lie on the Cytoplasmic side of the membrane. Residues 11–31 (ACMFSSILLFGAAGLLLFISL) form a helical; Signal-anchor for type II membrane protein membrane-spanning segment. Topologically, residues 32–424 (QDPTELAPQQ…NYSKPFADLY (393 aa)) are lumenal. Positions 47–107 (FNIRPRQPHH…PLQRGTRLRL (61 aa)) are disordered. Basic and acidic residues predominate over residues 66–77 (GDLKEPTERVTR). N-linked (GlcNAc...) asparagine glycosylation is present at N128. 3'-phosphoadenylyl sulfate contacts are provided by residues 198–204 (PKAGCSN) and 258–266 (REPFERLVS). 3 N-linked (GlcNAc...) asparagine glycosylation sites follow: N294, N367, and N415.

It belongs to the sulfotransferase 2 family. As to expression, predominantly expressed in pituitary gland. In brain, it is expressed in pituitary gland, cerebellum, medulla oblongata, pons, thalamus and spinal cord. Expressed in the epidermis. Expressed at lower level in lung, spleen, adrenal gland, placenta, prostate, testis, mammary gland and trachea.

It localises to the golgi apparatus membrane. In terms of biological role, catalyzes the transfer of sulfate to position 4 of non-reducing N-acetylgalactosamine (GalNAc) residues in both N-glycans and O-glycans. Required for biosynthesis of glycoprotein hormones lutropin and thyrotropin, by mediating sulfation of their carbohydrate structures. Only active against terminal GalNAcbeta1,GalNAcbeta. Not active toward chondroitin. The polypeptide is Carbohydrate sulfotransferase 8 (CHST8) (Homo sapiens (Human)).